The sequence spans 231 residues: Two-component response regulator ORR1 (231 aa).

One can recognise a Response regulatory domain in the interval 9–135; sequence RVLLVDDSPV…DVQRLRKCSP (127 aa). The residue at position 68 (aspartate 68) is a 4-aspartylphosphate.

This sequence belongs to the ARR family. Type-A subfamily. In terms of processing, two-component system major event consists of a His-to-Asp phosphorelay between a sensor histidine kinase (HK) and a response regulator (RR). In plants, the His-to-Asp phosphorelay involves an additional intermediate named Histidine-containing phosphotransfer protein (HPt). This multistep phosphorelay consists of a His-Asp-His-Asp sequential transfer of a phosphate group between first a His and an Asp of the HK protein, followed by the transfer to a conserved His of the HPt protein and finally the transfer to an Asp in the receiver domain of the RR protein. Expressed in mature leaves and flowers, and at low levels in roots and shoots.

Its function is as follows. Functions as a response regulator involved in His-to-Asp phosphorelay signal transduction system. Phosphorylation of the Asp residue in the receiver domain activates the ability of the protein to promote the transcription of target genes. Type-A response regulators seem to act as negative regulators of the cytokinin signaling. The sequence is that of Two-component response regulator ORR1 from Oryza sativa subsp. indica (Rice).